Here is a 98-residue protein sequence, read N- to C-terminus: MTEKLSTETRGPLLEPLFASGWEMVEGRDAIKKTFVFDNFVDAFGWMTRVAIWAEKWNHHPEWDNVYKTVNVVLTTHDVGGLSTLDAKLARKMDSLAG.

The protein belongs to the pterin-4-alpha-carbinolamine dehydratase family.

The catalysed reaction is (4aS,6R)-4a-hydroxy-L-erythro-5,6,7,8-tetrahydrobiopterin = (6R)-L-erythro-6,7-dihydrobiopterin + H2O. In Roseobacter denitrificans (strain ATCC 33942 / OCh 114) (Erythrobacter sp. (strain OCh 114)), this protein is Putative pterin-4-alpha-carbinolamine dehydratase.